We begin with the raw amino-acid sequence, 1004 residues long: MAGTDSPAAARFVYRCLLFAPAIVVGLLLPLTLPPIAAAQRHTASDNPSTYNIGGVLSNSESETYFHTIISHLNFDQQYVPRKVTYYDKTIRMDKNPIKTVFNVCDKLIENRVYAVVVSHEQTSGDLSPAAVSYTSGFYSIPVIGISSRDAAFSDKNIHVSFLRTVPPYYHQADVWLEMLSHFAYTKVIIIHSSDTDGRAILGRFQTTSQTYYDDVDVRATVELIVEFEPKLESFTEHLIDMKTAQSRVYLMYASTEDAQVIFRDAGEYNMTGEGHVWIVTEQALFANNTPDGVLGLQLEHAHSDKGHIRDSVYVLASAIKEMISNETIAEAPKDCGDSAVNWESGKRLFQYLKSRNITGETGQVAFDDNGDRIYAGYDVINIREHQKKHVVGKFSYDSMRAKMRMNINDSEIIWPGKQNRKPEGIMIPTHLKVLTIEEKPFVYVRRMGDDEFRCEPDERPCPLFNATDSTANEYCCRGYCIDLLIELSKRINFTYDLALSPDGQFGHYLLRNNSGAMTLRKEWTGLMGELVNERADMIVAPLTINPERAEYIEFSKPFKYQGITILEKKPSRSSTLVSFLQPFSNTLWILVMVSVHVVALVLYLLDRFSPFGRFKLSHSDSNEEKALNLSSAVWFAWGVLLNSGIGEGTPRSFSARVLGMVWAGFAMIIVASYTANLAAFLVLERPKTKLSGINDARLRNTMENLTCATVKGSSVDMYFRRQVELSNMYRTMEANNYATAEQAIQDVKKGKLMAFIWDSSRLEYEASKDCELVTAGELFGRSGYGVGLQKGSPWTDSVTLAILEFHESGFMEKLDKQWIFHGHVQQNCELFEKTPNTLGLKNMAGVFILVGVGIAGGVGLIIIEVIYKKHQVKKQKRLDIARHAADKWRGTIEKRKTIRASLAMQRQYNVGLNSTHPPGTISLAVDKRRYPRLGQRLGPERAWPGDAADVLRTRRPYELGKPGQSPKVMGATPAMLGRTRPQQNILPPRYSPGYTSDVSHLVV.

The first 39 residues, 1–39 (MAGTDSPAAARFVYRCLLFAPAIVVGLLLPLTLPPIAAA), serve as a signal peptide directing secretion. Residues 40 to 585 (QRHTASDNPS…TLVSFLQPFS (546 aa)) are Extracellular-facing. N-linked (GlcNAc...) asparagine glycosylation is found at Asn-270, Asn-326, Asn-357, Asn-409, Asn-466, Asn-493, and Asn-513. Residues 542 to 544 (PLT) and Arg-549 each bind glycine. A helical transmembrane segment spans residues 586–606 (NTLWILVMVSVHVVALVLYLL). Topologically, residues 607–663 (DRFSPFGRFKLSHSDSNEEKALNLSSAVWFAWGVLLNSGIGEGTPRSFSARVLGMVW) are cytoplasmic. A helical membrane pass occupies residues 664–684 (AGFAMIIVASYTANLAAFLVL). Topologically, residues 685–843 (ERPKTKLSGI…KTPNTLGLKN (159 aa)) are extracellular. An N-linked (GlcNAc...) asparagine glycan is attached at Asn-705. The glycine site is built by Ser-715 and Asp-759. A helical transmembrane segment spans residues 844–864 (MAGVFILVGVGIAGGVGLIII). At 865–1004 (EVIYKKHQVK…YTSDVSHLVV (140 aa)) the chain is on the cytoplasmic side. Residues 980 to 1004 (TRPQQNILPPRYSPGYTSDVSHLVV) are disordered. Positions 994-1004 (GYTSDVSHLVV) are enriched in polar residues.

Belongs to the glutamate-gated ion channel (TC 1.A.10.1) family. In terms of assembly, forms a heteromeric NMDA channel with Nmdar2.

Its subcellular location is the cell membrane. It localises to the postsynaptic cell membrane. The protein resides in the postsynaptic density. Functionally, NMDA receptor subtype of glutamate-gated ion channels with high calcium permeability and voltage-dependent sensitivity to magnesium. Mediated by glycine. This protein plays a key role in synaptic plasticity, synaptogenesis, excitotoxicity, memory acquisition and learning. It mediates neuronal functions in glutamate neurotransmission. Is involved in the cell surface targeting of NMDA receptors. Plays a role in associative learning and in long-term memory consolidation. In Drosophila persimilis (Fruit fly), this protein is Glutamate [NMDA] receptor subunit 1.